Reading from the N-terminus, the 97-residue chain is YcgL domain-containing protein Avin_32960 (97 aa).

Residues 3-87 form the YcgL domain; that stretch reads CICSIYKSPR…PEEEYVEHLP (85 aa).

This chain is YcgL domain-containing protein Avin_32960, found in Azotobacter vinelandii (strain DJ / ATCC BAA-1303).